Here is a 1203-residue protein sequence, read N- to C-terminus: MGNLKSVAQEPGPPCGLGLGLGLGLCGKQGPATPAPEPSRAPASLLPPAPEHSPPSSPLTQPPEGPKFPRVKNWEVGSITYDTLSAQAQQDGPCTPRRCLGSLVFPRKLQGRPSPGPPAPEQLLSQARDFINQYYSSIKRSGSQAHEQRLQEVEAEVAATGTYQLRESELVFGAKQAWRNAPRCVGRIQWGKLQVFDARDCRSAQEMFTYICNHIKYATNRGNLRSAITVFPQRCPGRGDFRIWNSQLVRYAGYRQQDGSVRGDPANVEITELCIQHGWTPGNGRFDVLPLLLQAPDDPPELFLLPPELVLEVPLEHPTLEWFAALGLRWYALPAVSNMLLEIGGLEFPAAPFSGWYMSTEIGTRNLCDPHRYNILEDVAVCMDLDTRTTSSLWKDKAAVEINVAVLHSYQLAKVTIVDHHAATASFMKHLENEQKARGGCPADWAWIVPPISGSLTPVFHQEMVNYFLSPAFRYQPDPWKGSAAKGTGITRKKTFKEVANAVKISASLMGTVMAKRVKATILYGSETGRAQSYAQQLGRLFRKAFDPRVLCMDEYDVVSLEHETLVLVVTSTFGNGDPPENGESFAAALMEMSGPYNSSPRPEQHKSYKIRFNSISCSDPLVSSWRRKRKESSNTDSAGALGTLRFCVFGLGSRAYPHFCAFARAVDTRLEELGGERLLQLGQGDELCGQEEAFRGWAQAAFQAACETFCVGEDAKAAARDIFSPKRSWKRQRYRLSAQAEGLQLLPGLIHVHRRKMFQATIRSVENLQSSKSTRATILVRLDTGGQEGLQYQPGDHIGVCPPNRPGLVEALLSRVEDPPAPTEPVAVEQLEKGSPGGPPPGWVRDPRLPPCTLRQALTFFLDITSPPSPQLLRLLSTLAEEPREQQELEALSQDPRRYEEWKWFRCPTLLEVLEQFPSVALPAPLLLTQLPLLQPRYYSVSSAPSTHPGEIHLTVAVLAYRTQDGLGPLHYGVCSTWLSQLKPGDPVPCFIRGAPSFRLPPDPSLPCILVGPGTGIAPFRGFWQERLHDIESKGLQPTPMTLVFGCRCSQLDHLYRDEVQNAQQRGVFGRVLTAFSREPDNPKTYVQDILRTELAAEVHRVLCLERGHMFVCGDVTMATNVLQTVQRILATEGDMELDEAGDVIGVLRDQQRYHEDIFGLTLRTQEVTSRIRTQSFSLQERQLRGAVPWAFDPPGSDTNSP.

A disordered region spans residues 1 to 71 (MGNLKSVAQE…PPEGPKFPRV (71 aa)). A lipid anchor (N-myristoyl glycine) is attached at glycine 2. S-palmitoyl cysteine attachment occurs at residues cysteine 15 and cysteine 26. Over residues 15–27 (CGLGLGLGLGLCG) the composition is skewed to gly residues. Threonine 33 is modified (phosphothreonine). Positions 33 to 66 (TPAPEPSRAPASLLPPAPEHSPPSSPLTQPPEGP) are enriched in pro residues. Zn(2+) is bound by residues cysteine 94 and cysteine 99. The segment at 98-486 (RCLGSLVFPR…PDPWKGSAAK (389 aa)) is interaction with NOSIP. Position 102 (serine 102) interacts with (6R)-L-erythro-5,6,7,8-tetrahydrobiopterin. Serine 114 is subject to Phosphoserine; by CDK5. Cysteine 184 is a binding site for heme b. L-arginine-binding residues include glutamine 247, tryptophan 356, tyrosine 357, and glutamate 361. Arginine 365 contacts (6R)-L-erythro-5,6,7,8-tetrahydrobiopterin. Asparagine 366 serves as a coordination point for L-arginine. Positions 446, 447, and 460 each coordinate (6R)-L-erythro-5,6,7,8-tetrahydrobiopterin. Tyrosine 475 provides a ligand contact to heme b. Positions 491-510 (TRKKTFKEVANAVKISASLM) are calmodulin-binding. Phosphothreonine; by AMPK is present on threonine 495. The Flavodoxin-like domain occupies 520-703 (ATILYGSETG…AFRGWAQAAF (184 aa)). Positions 526, 527, 528, 530, 572, and 573 each coordinate FMN. A phosphoserine mark is found at serine 615, serine 633, and serine 638. The FMN site is built by serine 654, cysteine 661, glutamate 687, and glutamine 691. Positions 756-1002 (RKMFQATIRS…IRGAPSFRLP (247 aa)) constitute an FAD-binding FR-type domain. Arginine 776 contributes to the NADP(+) binding site. Residue histidine 798 participates in FAD binding. At serine 836 the chain carries Phosphoserine. FAD-binding residues include arginine 938, tyrosine 940, serine 941, threonine 956, alanine 958, tyrosine 962, valine 975, cysteine 976, and serine 977. Positions 1016, 1049, 1078, 1079, 1085, 1087, and 1089 each coordinate NADP(+). Position 1175 is a phosphothreonine (threonine 1175). Position 1177 is a phosphoserine; by AMPK (serine 1177). Serine 1179 is modified (phosphoserine).

It belongs to the NOS family. Homodimer. Interacts with NOSIP and NOSTRIN. Interacts with HSP90AB1. Forms a complex with ASL, ASS1 and SLC7A1; the complex regulates cell-autonomous L-arginine synthesis and citrulline recycling while channeling extracellular L-arginine to nitric oxide synthesis pathway. Heme b is required as a cofactor. The cofactor is FAD. It depends on FMN as a cofactor. (6R)-L-erythro-5,6,7,8-tetrahydrobiopterin serves as cofactor. In terms of processing, phosphorylation by AMPK at Ser-1177 in the presence of Ca(2+)-calmodulin (CaM) activates activity. In absence of Ca(2+)-calmodulin, AMPK also phosphorylates Thr-495, resulting in inhibition of activity. Phosphorylation of Ser-114 by CDK5 reduces activity. Platelets, placenta, liver and kidney.

It is found in the cell membrane. It localises to the membrane. Its subcellular location is the caveola. The protein resides in the cytoplasm. The protein localises to the cytoskeleton. It is found in the golgi apparatus. The catalysed reaction is 2 L-arginine + 3 NADPH + 4 O2 + H(+) = 2 L-citrulline + 2 nitric oxide + 3 NADP(+) + 4 H2O. Its activity is regulated as follows. Stimulated by calcium/calmodulin. Inhibited by NOSIP and NOSTRIN. Its function is as follows. Produces nitric oxide (NO) which is implicated in vascular smooth muscle relaxation through a cGMP-mediated signal transduction pathway. NO mediates vascular endothelial growth factor (VEGF)-induced angiogenesis in coronary vessels and promotes blood clotting through the activation of platelets. Lacks eNOS activity, dominant-negative form that may down-regulate eNOS activity by forming heterodimers with isoform 1. The polypeptide is Nitric oxide synthase 3 (Homo sapiens (Human)).